We begin with the raw amino-acid sequence, 435 residues long: Glutamine synthetase (435 aa).

In terms of domain architecture, GS beta-grasp spans 12-94; that stretch reads KSIKYFMISY…VAADCVMDDR (83 aa). Residues 100-435 enclose the GS catalytic domain; that stretch reads PRVVLKRLVA…QWERDSTLDI (336 aa). Glu123, Glu125, Glu180, and Glu187 together coordinate Mg(2+). Residue Gly232 participates in L-glutamate binding. His236 serves as a coordination point for Mg(2+). Ser240 is an ATP binding site. Residues Arg291 and Arg315 each contribute to the L-glutamate site. ATP-binding residues include Arg315 and Arg320. Residue Glu328 participates in Mg(2+) binding. Residue Arg330 participates in L-glutamate binding.

The protein belongs to the glutamine synthetase family. In terms of assembly, homooctamer. Mg(2+) is required as a cofactor.

It catalyses the reaction L-glutamate + NH4(+) + ATP = L-glutamine + ADP + phosphate + H(+). Catalyzes the ATP-dependent biosynthesis of glutamine from glutamate and ammonia. This chain is Glutamine synthetase, found in Rhizobium leguminosarum bv. phaseoli.